Reading from the N-terminus, the 209-residue chain is Ras-like protein (209 aa).

10 to 17 contributes to the GTP binding site; it reads GGGLVGKS. The Effector region signature appears at 55–63; sequence YDPTVEDSR. T58 carries the post-translational modification Phosphothreonine. GTP-binding positions include 79 to 83 and 140 to 143; these read DTAGQ and NKAD. Residue C206 is modified to Cysteine methyl ester. C206 is lipidated: S-geranylgeranyl cysteine. Positions 207-209 are cleaved as a propeptide — removed in mature form; that stretch reads LII.

This sequence belongs to the small GTPase superfamily. Ras family. Post-translationally, phosphorylated in the presence of insulin.

The protein localises to the cell membrane. The enzyme catalyses GTP + H2O = GDP + phosphate + H(+). Alternates between an inactive form bound to GDP and an active form bound to GTP. Activated by a guanine nucleotide-exchange factor (GEF) and inactivated by a GTPase-activating protein (GAP). Its function is as follows. This protein is activated by the insulin/insulin (insulin-like)-receptor system. This transition enables the ras protein to interact with the lectin-receptor/lectin complex, a process which ultimately lead to an initiation of an intra-cellular signal-transduction chain. This chain is Ras-like protein, found in Geodia cydonium (Sponge).